The primary structure comprises 187 residues: Peptidyl-tRNA hydrolase (187 aa).

Y14 is a binding site for tRNA. The active-site Proton acceptor is the H19. 3 residues coordinate tRNA: Y64, N66, and N112.

This sequence belongs to the PTH family. As to quaternary structure, monomer.

Its subcellular location is the cytoplasm. It catalyses the reaction an N-acyl-L-alpha-aminoacyl-tRNA + H2O = an N-acyl-L-amino acid + a tRNA + H(+). Functionally, hydrolyzes ribosome-free peptidyl-tRNAs (with 1 or more amino acids incorporated), which drop off the ribosome during protein synthesis, or as a result of ribosome stalling. Its function is as follows. Catalyzes the release of premature peptidyl moieties from peptidyl-tRNA molecules trapped in stalled 50S ribosomal subunits, and thus maintains levels of free tRNAs and 50S ribosomes. This is Peptidyl-tRNA hydrolase from Clostridium acetobutylicum (strain ATCC 824 / DSM 792 / JCM 1419 / IAM 19013 / LMG 5710 / NBRC 13948 / NRRL B-527 / VKM B-1787 / 2291 / W).